The chain runs to 191 residues: dCTP deaminase, dUMP-forming (191 aa).

DCTP is bound by residues 101-106 (KSSLGR), Asp119, 127-129 (TLE), Gln148, Tyr162, and Gln174. Glu129 (proton donor/acceptor) is an active-site residue. A disordered region spans residues 169–191 (NRYQGQRGPTASRSHLNFHRTRI). Polar residues predominate over residues 171-183 (YQGQRGPTASRSH).

It belongs to the dCTP deaminase family. In terms of assembly, homotrimer.

It catalyses the reaction dCTP + 2 H2O = dUMP + NH4(+) + diphosphate. It functions in the pathway pyrimidine metabolism; dUMP biosynthesis; dUMP from dCTP: step 1/1. Functionally, bifunctional enzyme that catalyzes both the deamination of dCTP to dUTP and the hydrolysis of dUTP to dUMP without releasing the toxic dUTP intermediate. This Pseudarthrobacter chlorophenolicus (strain ATCC 700700 / DSM 12829 / CIP 107037 / JCM 12360 / KCTC 9906 / NCIMB 13794 / A6) (Arthrobacter chlorophenolicus) protein is dCTP deaminase, dUMP-forming.